Reading from the N-terminus, the 384-residue chain is MTGTPPPSRFPEQPIPPWRRAVLKVGSSLLAAAGGGLSPRFALDLAHFVSANITAGRQLVIVSSGAVAAGRALIPPLPESGGALAARQALAALGQAQLIALWQRFFDRPVAQVLLTHDDLRNRRRYLNARATLRELLHLGTLPVVNENDTVSVDELKLGDNDNLAAIVAALIDAQALFIATDIDGLYTTDPRHHPDAQPLHEVRTLTPEHLAMAGDSSSTVGTGGMRTKLEAALKAGAAGIDTYLFNGRSSDVVRGLAQHRLRGTRIHPTCTPIAARKYWLRHAPVEPGAILIDAGAAAALAQQGASLLPGGVLSAEGDFRRGDMIQIATRSPDHPPHPLARGLVQYSAADVRRIAGCHSRDIQPLLGYTYGDTIVHRDDLVLL.

Residue Lys24 participates in ATP binding. Ser64, Asp149, and Asn161 together coordinate substrate. Residues 181-182 (TD) and 223-229 (TGGMRTK) each bind ATP. The PUA domain occupies 288 to 370 (PGAILIDAGA…RDIQPLLGYT (83 aa)).

This sequence belongs to the glutamate 5-kinase family.

It localises to the cytoplasm. The catalysed reaction is L-glutamate + ATP = L-glutamyl 5-phosphate + ADP. The protein operates within amino-acid biosynthesis; L-proline biosynthesis; L-glutamate 5-semialdehyde from L-glutamate: step 1/2. In terms of biological role, catalyzes the transfer of a phosphate group to glutamate to form L-glutamate 5-phosphate. The polypeptide is Glutamate 5-kinase (Xylella fastidiosa (strain 9a5c)).